A 257-amino-acid polypeptide reads, in one-letter code: Glucanase inhibitor protein 1 (257 aa).

A signal peptide spans 1-28; it reads MKVFPALTSALVALGTAGVEAEHVQRSL. A Peptidase S1 domain is found at 29-256; that stretch reads VMGGGTVPVG…GLEWINSVIK (228 aa). A disulfide bond links Cys-56 and Cys-72. 2 N-linked (GlcNAc...) asparagine glycosylation sites follow: Asn-107 and Asn-180. Intrachain disulfides connect Cys-181–Cys-191 and Cys-201–Cys-232. A glycan (N-linked (GlcNAc...) asparagine) is linked at Asn-213.

The protein belongs to the peptidase S1 family. As to quaternary structure, interacts with host endoglucanases EGaseA.

The protein resides in the secreted. Secreted effector that suppresses host plant glucan elicitor-mediated defense responses. Targets host endoglucanase EGaseA and inhibits the EGaseA-mediated release of elicitor-active glucan oligosaccharides from P.sojae cell walls. In Phytophthora sojae (Soybean stem and root rot agent), this protein is Glucanase inhibitor protein 1.